Here is a 1165-residue protein sequence, read N- to C-terminus: Transient receptor potential cation channel subfamily M member 5 (1165 aa).

The Cytoplasmic segment spans residues 1 to 715 (MVEKSSERFD…LRRWNRFWSA (715 aa)). Serine 121 is modified (phosphoserine). Glutamate 212, cysteine 324, aspartate 333, aspartate 336, and glutamate 337 together coordinate Ca(2+). A helical transmembrane segment spans residues 716–740 (PVTVFMGNVIMYFAFLILFSYVLLL). Topologically, residues 741–751 (DFRPPPPYGPS) are extracellular. Residues 752 to 771 (AAEIILYFWVFTLVLEEIRQ) form a helical membrane-spanning segment. Residues glutamate 768 and glutamine 771 each contribute to the Ca(2+) site. Residues 772-792 (SFFTDEDMSILKKMKLYVEDN) are Cytoplasmic-facing. A helical transmembrane segment spans residues 793–811 (WNKCDMVAISLFVVGLSCR). Positions 794 and 797 each coordinate Ca(2+). At 812–818 (MAMSTYE) the chain is on the extracellular side. The helical transmembrane segment at 819 to 841 (AGRTVLALDFMVFTLRLIHIFAI) threads the bilayer. Over 842–850 (HKQLGPKII) the chain is Cytoplasmic. A helical transmembrane segment spans residues 851 to 880 (IVERMIKDVFFFLFFLSVWLIAYGVTTQAL). The Extracellular segment spans residues 881–889 (LHPNDPRID). Positions 890-930 (WVFRRALYRPYLHIFGQIPLEEIDAAKMPDDNCTTDVQEII) form an intramembrane region, pore-forming. The short motif at 904–906 (FGQ) is the Selectivity filter element. Residues 931–942 (LGTLPPCPNIYA) lie on the Extracellular side of the membrane. Residues 943–977 (NWLVILLLVIYLLVTNVLLLNLLIAMFSYTFQVVQ) form a helical membrane-spanning segment. The Cytoplasmic portion of the chain corresponds to 978–1165 (ENADIFWKFQ…TDKKLPFIDH (188 aa)). Glutamate 994 is a Ca(2+) binding site. Positions 1122-1165 (RDAPKAPRSIAGSSRDQQPQGAKRQQPAGHPAYGTDKKLPFIDH) are disordered. Over residues 1132 to 1141 (AGSSRDQQPQ) the composition is skewed to polar residues. Positions 1156-1165 (TDKKLPFIDH) are enriched in basic and acidic residues.

This sequence belongs to the transient receptor (TC 1.A.4) family. LTrpC subfamily. TRPM5 sub-subfamily. Homotetramer.

The protein resides in the cell membrane. The catalysed reaction is Na(+)(in) = Na(+)(out). It carries out the reaction K(+)(in) = K(+)(out). Its activity is regulated as follows. Ca(2+)-activated cation channel. Displays voltage dependence modulation. Regulated by PI(4,5)P2 levels. PI(4,5)P 2 reverses the Ca(2+) -induced desensitization of channels. Is highly temperature-sensitive. Its function is as follows. Monovalent cation-selective ion channel activated by intracellular Ca(2+) in a voltage- and temperature-dependent manner. Mediates the transport of Na(+), K(+) and Cs(+) ions equally well. Activated directly by increase in intracellular Ca(2+), but is impermeable to it. The activation mechanism of TRPM5 involves a multistep process. TRPM5 activation involves ligand binding (i.e., tastant molecule, glucose stimulation) to Gq/G-protein coupled receptors (GPCR) and leads to the breakdown of phosphatidylinositol bisphosphate (PIP2) into diacylglycerol (DAG) and inositol trisphosphate (IP3), IP3 binds to its receptors in the endoplasmic reticulum and cause Ca(2+) release. Simultaneously with the intracellular Ca(2+) release, DAG activates the protein kinase C (PKC), which phosphorylates the TRPM5 channel. This phosphorylation combined with the bound Ca(2+), leads to a robust inward current allowing the entry of sodium ions (Na+) into the cell. This ion influx depolarizes the cell membrane, generating action potentials that propagate TRPM5 signals. This is Transient receptor potential cation channel subfamily M member 5 from Danio rerio (Zebrafish).